A 357-amino-acid polypeptide reads, in one-letter code: S-adenosylmethionine:tRNA ribosyltransferase-isomerase (357 aa).

The protein belongs to the QueA family. As to quaternary structure, monomer.

It localises to the cytoplasm. The catalysed reaction is 7-aminomethyl-7-carbaguanosine(34) in tRNA + S-adenosyl-L-methionine = epoxyqueuosine(34) in tRNA + adenine + L-methionine + 2 H(+). Its pathway is tRNA modification; tRNA-queuosine biosynthesis. Functionally, transfers and isomerizes the ribose moiety from AdoMet to the 7-aminomethyl group of 7-deazaguanine (preQ1-tRNA) to give epoxyqueuosine (oQ-tRNA). This Buchnera aphidicola subsp. Schizaphis graminum (strain Sg) protein is S-adenosylmethionine:tRNA ribosyltransferase-isomerase.